The sequence spans 147 residues: Large ribosomal subunit protein uL15 (147 aa).

Residues M1–A42 are disordered.

Belongs to the universal ribosomal protein uL15 family. Part of the 50S ribosomal subunit.

Its function is as follows. Binds to the 23S rRNA. This Rhodococcus erythropolis (strain PR4 / NBRC 100887) protein is Large ribosomal subunit protein uL15.